Reading from the N-terminus, the 471-residue chain is MIPTLALVGRPNVGKSTLFNRLTRSRDAIVANFSGLTRDRQYGEATHGDKRFIVVDTGGISGEEEGIDSYMAGQSLQAIEEADMVAFIVDARVGLTAADMQIAQHLRTCNKPIFLLANKVDGVNESIVCAPFFELGLGDVIGIAAAHGRNINTMLDTVLENVEPEAEASEEDKAKGIKLAIVGRPNVGKSTLVNRMLGEDRVVVYDMPGTTRDSIYIEYERDGKAYTIIDTAGVRRRKNIKLSVEKFSIVKTLQAIDDANVVILVMDAQEGIVDQDLHLMGHVIDSGRALVVALNKWDNLDNDHKSYVKTELSRRLQFVDFADLHFISALHGTGVGDLYKSVHKAYSSATEKLNTNFLTKILEFAVSQHQPPLVNGRRIKLRYAHAGGQNPPIIVIHGNQTAAVPKNYVRYLEKIFRKELELHGTPIRFEFKSSENPFAGRKNAMSKKPEHPSRRANSGGKSINRRPRPKS.

2 EngA-type G domains span residues 3 to 166 and 177 to 350; these read PTLA…EPEA and IKLA…SSAT. GTP-binding positions include 9–16, 56–60, 118–121, 183–190, 230–234, and 295–298; these read GRPNVGKS, DTGGI, NKVD, DTAGV, and NKWD. A KH-like domain is found at 351 to 435; sequence EKLNTNFLTK…PIRFEFKSSE (85 aa). The segment at 432 to 471 is disordered; sequence KSSENPFAGRKNAMSKKPEHPSRRANSGGKSINRRPRPKS.

This sequence belongs to the TRAFAC class TrmE-Era-EngA-EngB-Septin-like GTPase superfamily. EngA (Der) GTPase family. In terms of assembly, associates with the 50S ribosomal subunit.

Functionally, GTPase that plays an essential role in the late steps of ribosome biogenesis. This chain is GTPase Der, found in Saccharophagus degradans (strain 2-40 / ATCC 43961 / DSM 17024).